The sequence spans 142 residues: Baculoviral IAP repeat-containing protein 5 (142 aa).

The BIR repeat unit spans residues 18–88 (RVSTFKNWPF…KHSSGCAFLS (71 aa)). Ser-20 carries the post-translational modification Phosphoserine; by AURKC. Lys-23 carries the post-translational modification N6-acetyllysine. Thr-34 is modified (phosphothreonine; by CDK1 and CDK15). Position 48 is a phosphothreonine; by CK2; in vitro (Thr-48). Residues Cys-57, Cys-60, His-77, and Cys-84 each contribute to the Zn(2+) site. Residues Lys-90, Lys-110, Lys-112, and Lys-115 each carry the N6-acetyllysine modification. Position 117 is a phosphothreonine; by AURKB (Thr-117).

It belongs to the IAP family. In terms of assembly, monomer or homodimer. Exists as a homodimer in the apo state and as a monomer in the CPC-bound state. The monomer protects cells against apoptosis more efficiently than the dimer. Only the dimeric form is capable of enhancing tubulin stability in cells. When phosphorylated, interacts with LAMTOR5/HBXIP; the resulting complex binds pro-CASP9, as well as active CASP9, but much less efficiently. Component of the chromosomal passenger complex (CPC) composed of at least BIRC5/survivin, CDCA8/borealin, INCENP, AURKB or AURKC; in the complex forms a triple-helix bundle-based subcomplex with INCENP and CDCA8. Interacts with JTB. Interacts (via BIR domain) with histone H3 phosphorylated at 'Thr-3' (H3pT3). Interacts with EVI5. Interacts with GTP-bound RAN in both the S and M phases of the cell cycle. Interacts with USP9X. Interacts with tubulin. Interacts with BIRC2/c-IAP1. The monomeric form interacts with XIAP/BIRC4. Both the dimeric and monomeric form can interact with DIABLO/SMAC. Interacts with BIRC6/bruce. Interacts with FBXL7; this interaction facilitates the polyubiquitination and subsequent proteasomal degradation of BIRC5 by the SCF(FBXL7) E3 ubiquitin-protein ligase complex. In terms of processing, ubiquitinated by the Cul9-RING ubiquitin-protein ligase complex, leading to its degradation. Ubiquitination is required for centrosomal targeting. Deubiquitinated by USP35 or USP38; leading to stabilization. Post-translationally, in vitro phosphorylation at Thr-117 by AURKB prevents interaction with INCENP and localization to mitotic chromosomes. Phosphorylation at Thr-48 by CK2 is critical for its mitotic and anti-apoptotic activities. Phosphorylation at Thr-34 by CDK15 is critical for its anti-apoptotic activity. Phosphorylation at Ser-20 by AURKC is critical for regulation of proper chromosome alignment and segregation, and possibly cytokinesis. In terms of tissue distribution, expressed in spleen, lung, brain, heart, kidney and intestine (at protein level). Expressed in cochlea including the organ of Corti, the lateral wall, the interdental cells of the Limbus as well as in cells of the cochlear nerve and the spiral ganglions (at protein level). Also expressed in Schwann cells (at protein level). Not expressed in cells of the inner and outer sulcus or the Reissner's membrane (at protein level).

Its subcellular location is the cytoplasm. The protein localises to the nucleus. It is found in the chromosome. It localises to the centromere. The protein resides in the cytoskeleton. Its subcellular location is the spindle. The protein localises to the kinetochore. It is found in the midbody. Its function is as follows. Multitasking protein that has dual roles in promoting cell proliferation and preventing apoptosis. Component of a chromosome passage protein complex (CPC) which is essential for chromosome alignment and segregation during mitosis and cytokinesis. Acts as an important regulator of the localization of this complex; directs CPC movement to different locations from the inner centromere during prometaphase to midbody during cytokinesis and participates in the organization of the center spindle by associating with polymerized microtubules. Involved in the recruitment of CPC to centromeres during early mitosis via association with histone H3 phosphorylated at 'Thr-3' (H3pT3) during mitosis. The complex with RAN plays a role in mitotic spindle formation by serving as a physical scaffold to help deliver the RAN effector molecule TPX2 to microtubules. May counteract a default induction of apoptosis in G2/M phase. The acetylated form represses STAT3 transactivation of target gene promoters. May play a role in neoplasia. Inhibitor of CASP3 and CASP7. Essential for the maintenance of mitochondrial integrity and function. This Cavia porcellus (Guinea pig) protein is Baculoviral IAP repeat-containing protein 5.